The primary structure comprises 224 residues: Ribonuclease T (224 aa).

Residues 32 to 206 (VVVDVETGGF…YDTEKTAELF (175 aa)) enclose the Exonuclease domain. Mg(2+) is bound by residues Asp-35, Glu-37, His-193, and Asp-198. The active-site Proton donor/acceptor is the His-193.

It belongs to the RNase T family. As to quaternary structure, homodimer. Mg(2+) serves as cofactor.

Its function is as follows. Trims short 3' overhangs of a variety of RNA species, leaving a one or two nucleotide 3' overhang. Responsible for the end-turnover of tRNA: specifically removes the terminal AMP residue from uncharged tRNA (tRNA-C-C-A). Also appears to be involved in tRNA biosynthesis. The chain is Ribonuclease T from Pseudomonas fluorescens (strain Pf0-1).